The primary structure comprises 764 residues: Sesterfisherol synthase (764 aa).

The interval 2–331 is terpene cyclase; that stretch reads EVWEHSRPIA…SPRHHAWRNN (330 aa). Aspartate 95 serves as a coordination point for Mg(2+). Substrate contacts are provided by residues aspartate 95, 187–190, asparagine 231, 235–239, and 324–325; these read RRDD, SFDRE, and RH. Positions 95–99 match the DDXXD 1 motif; that stretch reads DDGYE. An NSE/DTE motif is present at residues 231 to 239; that stretch reads NDYWSFDRE. Positions 332–759 are prenyltransferase; that stretch reads SRNGLKPANH…PMLRLLLEKL (428 aa). The disordered stretch occupies residues 347–372; it reads LITPSNNLNSSKGSEEQMQDSDNGTR. Polar residues predominate over residues 348-358; it reads ITPSNNLNSSK. Positions 476, 479, and 508 each coordinate isopentenyl diphosphate. Residues aspartate 515 and aspartate 519 each coordinate Mg(2+). A DDXXD 2 motif is present at residues 515 to 519; it reads DDIED. A dimethylallyl diphosphate-binding site is contributed by arginine 524. Arginine 525 contributes to the isopentenyl diphosphate binding site. Lysine 602, threonine 603, glutamine 638, asparagine 645, lysine 655, and lysine 665 together coordinate dimethylallyl diphosphate.

The protein in the N-terminal section; belongs to the terpene synthase family. In the C-terminal section; belongs to the FPP/GGPP synthase family. In terms of assembly, hexamer. Requires Mg(2+) as cofactor.

The enzyme catalyses isopentenyl diphosphate + (2E,6E)-farnesyl diphosphate = (2E,6E,10E)-geranylgeranyl diphosphate + diphosphate. It catalyses the reaction isopentenyl diphosphate + (2E,6E,10E)-geranylgeranyl diphosphate = (2E,6E,10E,14E)-geranylfarnesyl diphosphate + diphosphate. It carries out the reaction (2E,6E,10E,14E)-geranylfarnesyl diphosphate + H2O = sesterfisherol + diphosphate. It functions in the pathway secondary metabolite biosynthesis; terpenoid biosynthesis. Its function is as follows. Bifunctional terpene synthase; part of the gene cluster that mediates the biosynthesis of sesterfisheric acid. The bifunctional terpene synthase NfSS converts dimethylallyl diphosphate (DMAPP) and isopentenyl diphosphate (IPP) into sesterfisherol. The C-terminal prenyltransferase (PT) domain of NfSS catalyzes formation of geranylfarnesyl pyrophosphate (GFPP), whereas the N-terminal terpene cyclase (TC) domain catalyzes the cyclization of GFPP to sesterfisherol. The cytochrome P450 monooxygenase NfP450 then catalyzes oxidative modifications of sesterfisherol into sesterfisheric acid. The protein is Sesterfisherol synthase of Neosartorya fischeri (strain ATCC 1020 / DSM 3700 / CBS 544.65 / FGSC A1164 / JCM 1740 / NRRL 181 / WB 181) (Aspergillus fischerianus).